We begin with the raw amino-acid sequence, 318 residues long: MSSRPPYLPPIPTHVPGATAAELAALPEPVILISGISGGGKSVALNALEDAGYFCVDNLPPELLPEFIRLQRAQAVRKVAVAVDVRNAASLPKLLPLVDQLRREGTRILPMFLESRSDTLVRRFSETRRRHPLSSRQDDQGQTRSALIDAIEHERELLASLREVSTVIDTSDLRPAQLRTWVRQLVGAAHSSLTLVFESFAFKHGVPRDADLVFDLRVLPNPHYVRELRPLNGRDAGVIDFMHAQPEAAEMLAQIEGFLLRWLPSYAMDQRSYLTVALGCTGGQHRSVYGAEQLAQRFRERVPTLVRHREIEAREAVL.

35–42 contacts ATP; sequence GISGGGKS. 84–87 contributes to the GTP binding site; sequence DVRN.

This sequence belongs to the RapZ-like family.

Functionally, displays ATPase and GTPase activities. The protein is Nucleotide-binding protein Lcho_3490 of Leptothrix cholodnii (strain ATCC 51168 / LMG 8142 / SP-6) (Leptothrix discophora (strain SP-6)).